Reading from the N-terminus, the 228-residue chain is Phosphoribosylformylglycinamidine synthase subunit PurQ (228 aa).

Positions 3 to 226 constitute a Glutamine amidotransferase type-1 domain; the sequence is FAVIVFPGSN…VNYWRETHVV (224 aa). C86 serves as the catalytic Nucleophile. Residues H195 and E197 contribute to the active site.

As to quaternary structure, part of the FGAM synthase complex composed of 1 PurL, 1 PurQ and 2 PurS subunits.

It localises to the cytoplasm. The enzyme catalyses N(2)-formyl-N(1)-(5-phospho-beta-D-ribosyl)glycinamide + L-glutamine + ATP + H2O = 2-formamido-N(1)-(5-O-phospho-beta-D-ribosyl)acetamidine + L-glutamate + ADP + phosphate + H(+). The catalysed reaction is L-glutamine + H2O = L-glutamate + NH4(+). The protein operates within purine metabolism; IMP biosynthesis via de novo pathway; 5-amino-1-(5-phospho-D-ribosyl)imidazole from N(2)-formyl-N(1)-(5-phospho-D-ribosyl)glycinamide: step 1/2. In terms of biological role, part of the phosphoribosylformylglycinamidine synthase complex involved in the purines biosynthetic pathway. Catalyzes the ATP-dependent conversion of formylglycinamide ribonucleotide (FGAR) and glutamine to yield formylglycinamidine ribonucleotide (FGAM) and glutamate. The FGAM synthase complex is composed of three subunits. PurQ produces an ammonia molecule by converting glutamine to glutamate. PurL transfers the ammonia molecule to FGAR to form FGAM in an ATP-dependent manner. PurS interacts with PurQ and PurL and is thought to assist in the transfer of the ammonia molecule from PurQ to PurL. The chain is Phosphoribosylformylglycinamidine synthase subunit PurQ from Geobacillus thermodenitrificans (strain NG80-2).